The chain runs to 1872 residues: MVKLANPLYTEWILEAVQKIKKQKQRPSEERICHAVSTSHGLDKKTVSEQLELSVQDGSVLKVTNKGLASYKDPDNPGRFSSVKPGTFPKPTKGSKGPPCNDLRNVDWNKLLKRAIEGLEEPNGSSLKNIEKYLRSQSDLTGTTNHPAFQQRLRLGAKRAVNNGRLLKEGPQYRVNSGSSDGKGAPQYPSAFPSSLPPVSLLPHEKDQPRADPIPICSFCLGTKESNREKKPEELLSCADCGSSGHPSCLKFCPELTANVKALRWQCIECKTCSACRVQGKNADNMLFCDSCDRGFHMECCDPPLSRMPKGMWICQVCRPKKKGRKLLHEKAAQIKRRYAKPIGRPKNKLKQRLLSVTSDEGSMSAFTGRGSPGRGQKTKVSTTPSSGHAASGKHSSSRLAVTDPTRPGATTKTTTSSTYISASTLKVNKKTKGLIDGLTKFFTPSPDGRRSRGEIIDFSKHYRPRKKVSQKQSCTSHVLATDTDIKISIKQESADVSLVGNKELVTEEDLDVFKQAQELSWEKIECESGVEDCGRYPSVIEFGKYEIQTWYSSPYPQEYARLPKLYLCEFCLKYMKSKNILLRHSKKCGWFHPPANEIYRRKDLSVFEVDGNMSKIYCQNLCLLAKLFLDHKTLYYDVEPFLFYVLTKNDEKGCHLVGYFSKEKLCQQKYNVSCIMIMPQHQRQGFGRFLIDFSYLLSRREGQAGSPEKPLSDLGRLSYLAYWKSVILEYLYRHHERHISIKAISRATGMCPHDIATTLQHLHMIDRRDGRFVIIRREKLILGHMEKLKNCSRPNELDPESLRWTPMLISNAVVSEEEREAEKEAERLMEQASCWEKEEQEILSSRVSSRQSSAKVQSKNKYLHSPERRPVAGERGQLLELSKESSEEEEEEEEEDDEEEEEEEEEESIQTSPPRLTKPQSVSIKRKRPFVVKKKRGRKRRRINSSVTTETISETTEVLNEPFDNSDEERPMPQLEPTCEIPVEEGGRKPVLRKAFPHQPGKKRQTEEEEGEDNHFFKTAALCRKDVDDDAEHLKEGSKDNPEPLKCRQVWPKGAKRGLSKWKQSKERKTGFKLNLYTPPETPMEPEDQVTIEEQKELSEDKGSPVGMEREVTETVDALLPQEGSRREETGIPVSPHKSPGGKVDEEDLIRGEEEGEEEGEEEGEREEQEEEEEVTTEKDLDGAKSKENPEPEISMEKEDPVHLGDHEEDEDEEEEPSHNEDHDADDEDDGHMEAANMERGDLPRETFKDALEGQEAFLDLSIQPSHSNPEVLMNCGVDLTMSCNSEPKELAGDTGTAPESDAEPPEEQTQKQDQKNSDGVDAELEEGGPAAVEIDSETAQAVQSLTQENREHDDTFPDCAETQEACRSLQNYTHTDQSPQIATTLDECQQSDHSSPVSSVHSHPGQSVRSVNSPSVPALENSYAQISPDQTAITVPPLQNMETSPMMDVPSVSDHSQQVVDSGFSDLGSIESTTENYENPSSYDSTMGGSICGNGSSQNSCSYSSLTSSNLTQNSCAVTQQMSNISGSCSMLQQTSISSPPTCSVKSPQGCVVERPPSSSQQLAQCSMAANFTPPMQLADIPETSNANIGLYERMGQSDFGAGHYPQPSATFSLAKLQQLTNTLIDHSLPYSHSAAVTSYANSASLSTPLSNTGLVQLSQSPHSVPGGPQAQATMTPPPNLTPPPMNLPPPLLQRNMAASNIGISHSQRLQTQIASKGHVSMRTKAASLSPAAATHQSQIYGRSQTVAMQGPARTLTMQRGMNMSVNLMPAPAYNVNSVNMNMNTLNAMNGYSMSQPMMNSGYHSNHGYMNQTPQYPMQMQMGMMGSQPYAQQPMQTPPHANMMYTAPGHHGYMNTGMSKQSLNGSYMRR.

Residues 1 to 77 (MVKLANPLYT…LASYKDPDNP (77 aa)) enclose the SAMD1-like winged helix (WH) domain. 2 disordered regions span residues 70 to 103 (SYKDPDNPGRFSSVKPGTFPKPTKGSKGPPCNDL) and 168 to 207 (KEGPQYRVNSGSSDGKGAPQYPSAFPSSLPPVSLLPHEKD). The region spanning 104-177 (RNVDWNKLLK…KEGPQYRVNS (74 aa)) is the H15 domain. A compositionally biased stretch (low complexity) spans 189 to 202 (PSAFPSSLPPVSLL). 2 consecutive PHD-type zinc fingers follow at residues 214–273 (IPIC…CKTC) and 270–321 (CKTC…CRPK). At S356 the chain carries Phosphoserine. Residues 361-417 (EGSMSAFTGRGSPGRGQKTKVSTTPSSGHAASGKHSSSRLAVTDPTRPGATTKTTTS) are disordered. Positions 362–535 (GSMSAFTGRG…ECESGVEDCG (174 aa)) are negatively regulates HAT activity. Low complexity predominate over residues 386-395 (SSGHAASGKH). K491 participates in a covalent cross-link: Glycyl lysine isopeptide (Lys-Gly) (interchain with G-Cter in SUMO2). Residues 533-807 (DCGRYPSVIE…LDPESLRWTP (275 aa)) enclose the MYST-type HAT domain. Residues 536 to 826 (RYPSVIEFGK…EEEREAEKEA (291 aa)) form a catalytic region. The C2HC MYST-type zinc-finger motif lies at 566-591 (LYLCEFCLKYMKSKNILLRHSKKCGW). An interaction with BRPF1 region spans residues 570-826 (EFCLKYMKSK…EEEREAEKEA (257 aa)). N6-acetyllysine; by autocatalysis is present on K633. Acetyl-CoA contacts are provided by residues 674-678 (SCIMI) and 683-689 (QRQGFGR). E709 serves as the catalytic Proton donor/acceptor. S713 lines the acetyl-CoA pocket. Positions 846 to 860 (SRVSSRQSSAKVQSK) are enriched in low complexity. Disordered stretches follow at residues 846-1018 (SRVS…NHFF), 1031-1252 (DAEH…FKDA), 1283-1358 (MSCN…DDTF), and 1388-1418 (DECQQSDHSSPVSSVHSHPGQSVRSVNSPSV). N6-acetyllysine is present on residues K856, K860, and K862. S866 is modified (phosphoserine). The segment covering 887 to 909 (SEEEEEEEEEDDEEEEEEEEEES) has biased composition (acidic residues). The segment covering 910-924 (IQTSPPRLTKPQSVS) has biased composition (polar residues). Residues 925–944 (IKRKRPFVVKKKRGRKRRRI) show a composition bias toward basic residues. Positions 946-959 (SSVTTETISETTEV) are enriched in low complexity. Residues 991 to 1004 (PVLRKAFPHQPGKK) show a composition bias toward basic residues. 2 stretches are compositionally biased toward basic and acidic residues: residues 1031–1047 (DAEHLKEGSKDNPEPLK) and 1094–1114 (EEQKELSEDKGSPVGMEREVT). Residues 1155–1176 (EEGEEEGEEEGEREEQEEEEEV) show a composition bias toward acidic residues. The span at 1177–1207 (TTEKDLDGAKSKENPEPEISMEKEDPVHLGD) shows a compositional bias: basic and acidic residues. Residues 1208–1217 (HEEDEDEEEE) show a composition bias toward acidic residues. 2 stretches are compositionally biased toward basic and acidic residues: residues 1238 to 1252 (NMERGDLPRETFKDA) and 1310 to 1320 (QTQKQDQKNSD). Positions 1339–1349 (ETAQAVQSLTQ) are enriched in polar residues. Residues 1359-1872 (PDCAETQEAC…QSLNGSYMRR (514 aa)) are interaction with RUNX1 and RUNX2. Low complexity predominate over residues 1393 to 1410 (SDHSSPVSSVHSHPGQSV).

Belongs to the MYST (SAS/MOZ) family. As to quaternary structure, component of the MOZ/MORF complex composed at least of ING5, KAT6A, KAT6B, MEAF6 and one of BRPF1, BRD1/BRPF2 and BRPF3. Interacts with RUNX1 and RUNX2. Autoacetylation at Lys-633 is required for proper function. In terms of tissue distribution, ubiquitously expressed.

It localises to the nucleus. It catalyses the reaction L-lysyl-[protein] + acetyl-CoA = N(6)-acetyl-L-lysyl-[protein] + CoA + H(+). Histone acetyltransferase which may be involved in both positive and negative regulation of transcription. Required for RUNX2-dependent transcriptional activation. Component of the MOZ/MORF complex which has a histone H3 acetyltransferase activity. Involved in cerebral cortex development. The sequence is that of Histone acetyltransferase KAT6B (Kat6b) from Mus musculus (Mouse).